We begin with the raw amino-acid sequence, 947 residues long: ATPase 10, plasma membrane-type (947 aa).

At 1–69 (MAEDLDKPLL…EKQENRFVKF (69 aa)) the chain is on the cytoplasmic side. The chain crosses the membrane as a helical span at residues 70–89 (LGFMWNPLSWVMEAAALMAI). Topologically, residues 90-101 (ALANSQSLGPDW) are extracellular. The helical transmembrane segment at 102 to 122 (EDFTGIVCLLLINATISFFEE) threads the bilayer. Residues 123–251 (NNAGNAAAAL…GHFQQVLTSI (129 aa)) are Cytoplasmic-facing. A helical membrane pass occupies residues 252–272 (GNFCICSIAVGMVLEIIIMFP). Topologically, residues 273–281 (VQHRSYRIG) are extracellular. A helical membrane pass occupies residues 282–299 (INNLLVLLIGGIPIAMPT). Residues 300–650 (VLSVTLAIGS…TSRAIFQRMR (351 aa)) lie on the Cytoplasmic side of the membrane. The active-site 4-aspartylphosphate intermediate is D337. Residues D595 and D599 each coordinate Mg(2+). A helical transmembrane segment spans residues 651 to 672 (NYTVYAVSITIRIVLGFTLLAL). Over 673–677 (IWEYD) the chain is Extracellular. Residues 678-700 (FPPFMVLIIAILNDGTIMTISKD) form a helical membrane-spanning segment. Over 701–716 (RVRPSPTPESWKLNQI) the chain is Cytoplasmic. Residues 717–737 (FATGIVIGTYLALVTVLFYWI) traverse the membrane as a helical segment. Residues 738–758 (IVSTTFFEKHFHVKSIANNSE) are Extracellular-facing. A helical transmembrane segment spans residues 759-779 (QVSSAMYLQVSIISQALIFVT). The Cytoplasmic segment spans residues 780-791 (RSRGWSFFERPG). Residues 792–812 (TLLIFAFILAQLAATLIAVYA) form a helical membrane-spanning segment. At 813 to 820 (NISFAKIT) the chain is on the extracellular side. Residues 821-841 (GIGWRWAGVIWLYSLIFYIPL) traverse the membrane as a helical segment. The Cytoplasmic segment spans residues 842-947 (DVIKFVFHYA…QRMIRAAHTV (106 aa)). Residues S897 and S929 each carry the phosphoserine modification. Residue T946 is modified to Phosphothreonine.

Belongs to the cation transport ATPase (P-type) (TC 3.A.3) family. Type IIIA subfamily. In terms of tissue distribution, found primarily in developing seeds. Expressed in guard cells, mesophyll cells, leaves and roots.

It localises to the membrane. It carries out the reaction ATP + H2O + H(+)(in) = ADP + phosphate + 2 H(+)(out). In terms of biological role, the plasma membrane H(+) ATPase of plants and fungi generates a proton gradient that drives the active transport of nutrients by H(+)-symport. The resulting external acidification and/or internal alkinization may mediate growth responses. This is ATPase 10, plasma membrane-type (AHA10) from Arabidopsis thaliana (Mouse-ear cress).